The sequence spans 365 residues: tRNA/tmRNA (uracil-C(5))-methyltransferase (365 aa).

S-adenosyl-L-methionine contacts are provided by Gln189, Tyr217, Asn222, Glu238, and Asp298. Catalysis depends on Cys323, which acts as the Nucleophile. The active-site Proton acceptor is the Glu357.

This sequence belongs to the class I-like SAM-binding methyltransferase superfamily. RNA M5U methyltransferase family. TrmA subfamily.

The enzyme catalyses uridine(54) in tRNA + S-adenosyl-L-methionine = 5-methyluridine(54) in tRNA + S-adenosyl-L-homocysteine + H(+). It carries out the reaction uridine(341) in tmRNA + S-adenosyl-L-methionine = 5-methyluridine(341) in tmRNA + S-adenosyl-L-homocysteine + H(+). In terms of biological role, dual-specificity methyltransferase that catalyzes the formation of 5-methyluridine at position 54 (m5U54) in all tRNAs, and that of position 341 (m5U341) in tmRNA (transfer-mRNA). This chain is tRNA/tmRNA (uracil-C(5))-methyltransferase, found in Shewanella baltica (strain OS155 / ATCC BAA-1091).